We begin with the raw amino-acid sequence, 274 residues long: Proteasome subunit beta (274 aa).

Positions M1–G52 are cleaved as a propeptide — removed in mature form; by autocatalysis. The active-site Nucleophile is the T53.

This sequence belongs to the peptidase T1B family. In terms of assembly, the 20S proteasome core is composed of 14 alpha and 14 beta subunits that assemble into four stacked heptameric rings, resulting in a barrel-shaped structure. The two inner rings, each composed of seven catalytic beta subunits, are sandwiched by two outer rings, each composed of seven alpha subunits. The catalytic chamber with the active sites is on the inside of the barrel. Has a gated structure, the ends of the cylinder being occluded by the N-termini of the alpha-subunits. Is capped by the proteasome-associated ATPase, ARC.

The protein resides in the cytoplasm. It carries out the reaction Cleavage of peptide bonds with very broad specificity.. It functions in the pathway protein degradation; proteasomal Pup-dependent pathway. With respect to regulation, the formation of the proteasomal ATPase ARC-20S proteasome complex, likely via the docking of the C-termini of ARC into the intersubunit pockets in the alpha-rings, may trigger opening of the gate for substrate entry. Interconversion between the open-gate and close-gate conformations leads to a dynamic regulation of the 20S proteasome proteolysis activity. In terms of biological role, component of the proteasome core, a large protease complex with broad specificity involved in protein degradation. This chain is Proteasome subunit beta, found in Parafrankia sp. (strain EAN1pec).